The following is a 146-amino-acid chain: Ubiquitin-conjugating enzyme E2 variant 1D (146 aa).

Residues 13–146 (PRNFRLLEEL…LVQPPEGTCF (134 aa)) form the UBC core domain.

This sequence belongs to the ubiquitin-conjugating enzyme family. As to quaternary structure, heterodimer with UBC35 or UBC36. In terms of tissue distribution, expressed in roots, shoots, leaves, stems, flowers and pollen.

Functionally, has no ubiquitin ligase activity on its own. The heterodimer with UBC catalyzes the synthesis of non-canonical poly-ubiquitin chains that are linked through 'Lys-63'. This type of poly-ubiquitination does not lead to protein degradation by the proteasome. Mediates transcriptional activation of target genes. May play a role in the control of progress through the cell cycle and differentiation. Involved in the error-free DNA repair pathway and contributes to the survival of cells after DNA damage. This chain is Ubiquitin-conjugating enzyme E2 variant 1D (UEV1D), found in Arabidopsis thaliana (Mouse-ear cress).